Here is a 368-residue protein sequence, read N- to C-terminus: uncharacterized protein (368 aa).

The protein belongs to the CdaR family.

This is an uncharacterized protein from Bacillus subtilis (strain 168).